The following is a 140-amino-acid chain: Putative nickel-responsive regulator (140 aa).

Ni(2+) contacts are provided by His-81, His-92, His-94, and Cys-100.

This sequence belongs to the transcriptional regulatory CopG/NikR family. Ni(2+) is required as a cofactor.

Its function is as follows. Transcriptional regulator. In Methanocella arvoryzae (strain DSM 22066 / NBRC 105507 / MRE50), this protein is Putative nickel-responsive regulator.